The following is a 90-amino-acid chain: DNA-directed RNA polymerase subunit omega (90 aa).

The interval 70 to 90 is disordered; that stretch reads QEQQEQEAAELAAVSSIMHNR.

This sequence belongs to the RNA polymerase subunit omega family. The RNAP catalytic core consists of 2 alpha, 1 beta, 1 beta' and 1 omega subunit. When a sigma factor is associated with the core the holoenzyme is formed, which can initiate transcription.

The catalysed reaction is RNA(n) + a ribonucleoside 5'-triphosphate = RNA(n+1) + diphosphate. Functionally, promotes RNA polymerase assembly. Latches the N- and C-terminal regions of the beta' subunit thereby facilitating its interaction with the beta and alpha subunits. In Vibrio cholerae serotype O1 (strain ATCC 39541 / Classical Ogawa 395 / O395), this protein is DNA-directed RNA polymerase subunit omega.